The sequence spans 112 residues: MSNIYDSANELSRGLRGLPEYKAVKAAKDAIAADAEASKIFTEYLAFQEEIQKLAQTGQMPDASFQAKMEGFGKQIQGNSLLSEFFTKQQQLAIYLSDIEKIVFEPVSELLK.

This sequence belongs to the UPF0342 family.

This Streptococcus pneumoniae (strain Hungary19A-6) protein is UPF0342 protein SPH_1504.